We begin with the raw amino-acid sequence, 214 residues long: Protein-L-isoaspartate O-methyltransferase (214 aa).

Residue serine 61 is part of the active site.

It belongs to the methyltransferase superfamily. L-isoaspartyl/D-aspartyl protein methyltransferase family.

It localises to the cytoplasm. It carries out the reaction [protein]-L-isoaspartate + S-adenosyl-L-methionine = [protein]-L-isoaspartate alpha-methyl ester + S-adenosyl-L-homocysteine. Catalyzes the methyl esterification of L-isoaspartyl residues in peptides and proteins that result from spontaneous decomposition of normal L-aspartyl and L-asparaginyl residues. It plays a role in the repair and/or degradation of damaged proteins. The polypeptide is Protein-L-isoaspartate O-methyltransferase (Paramagnetospirillum magneticum (strain ATCC 700264 / AMB-1) (Magnetospirillum magneticum)).